The chain runs to 305 residues: Beta-carotene 3-hydroxylase, chloroplastic (305 aa).

The transit peptide at 1–41 (MAFAMSSSLTLFQYQSFGKKPFFSRRRDFAGCSMMNPLVAR) directs the protein to the chloroplast. The next 2 helical transmembrane spans lie at 98–118 (YLVAAMASSLGFTFMAAAAVY) and 129–149 (AVPLTEMMGTFSLAVGSAVGM). Residues 146 to 272 (AVGMEYWARW…KFNGVPYGLF (127 aa)) form the Fatty acid hydroxylase domain. Positions 157-162 (HRALWH) match the Histidine box-1 motif. The short motif at 169–173 (HESHH) is the Histidine box-2 element. Transmembrane regions (helical) follow at residues 184–204 (DVFALINAFPAVALLAFGFFH) and 207–227 (FFSGLCFGAGLGITLYGMAYM). A Histidine box-3 motif is present at residues 230–235 (HDGLVH). A Histidine box-4 motif is present at residues 256–260 (HQIHH).

It belongs to the sterol desaturase family. In terms of assembly, homodimer. Expressed in flower buds and lips. Detected in roots and leaves.

The protein localises to the plastid. It localises to the chloroplast membrane. It catalyses the reaction all-trans-beta-carotene + 4 reduced [2Fe-2S]-[ferredoxin] + 2 O2 + 4 H(+) = all-trans-zeaxanthin + 4 oxidized [2Fe-2S]-[ferredoxin] + 2 H2O. In terms of biological role, nonheme diiron monooxygenase involved in the biosynthesis of xanthophylls. Specific for beta-ring hydroxylations of beta-carotene. Uses ferredoxin as an electron donor. The sequence is that of Beta-carotene 3-hydroxylase, chloroplastic (BHY) from Oncidium hybrid cultivar (Orchid).